Consider the following 207-residue polypeptide: Pyridoxal 5'-phosphate synthase subunit PdxT (207 aa).

L-glutamine is bound at residue 51–53 (GES). Catalysis depends on Cys83, which acts as the Nucleophile. Residues Arg112 and 143–144 (IR) each bind L-glutamine. Catalysis depends on charge relay system residues His184 and Glu186.

The protein belongs to the glutaminase PdxT/SNO family. In the presence of PdxS, forms a dodecamer of heterodimers. Only shows activity in the heterodimer.

It carries out the reaction aldehydo-D-ribose 5-phosphate + D-glyceraldehyde 3-phosphate + L-glutamine = pyridoxal 5'-phosphate + L-glutamate + phosphate + 3 H2O + H(+). The catalysed reaction is L-glutamine + H2O = L-glutamate + NH4(+). It functions in the pathway cofactor biosynthesis; pyridoxal 5'-phosphate biosynthesis. Catalyzes the hydrolysis of glutamine to glutamate and ammonia as part of the biosynthesis of pyridoxal 5'-phosphate. The resulting ammonia molecule is channeled to the active site of PdxS. The protein is Pyridoxal 5'-phosphate synthase subunit PdxT of Kineococcus radiotolerans (strain ATCC BAA-149 / DSM 14245 / SRS30216).